We begin with the raw amino-acid sequence, 504 residues long: Maturase K (504 aa).

The protein belongs to the intron maturase 2 family. MatK subfamily.

It localises to the plastid. Its subcellular location is the chloroplast. In terms of biological role, usually encoded in the trnK tRNA gene intron. Probably assists in splicing its own and other chloroplast group II introns. The polypeptide is Maturase K (Hamamelis virginiana (Witch-hazel)).